We begin with the raw amino-acid sequence, 329 residues long: T-lymphocyte activation antigen CD86 (329 aa).

The N-terminal stretch at 1–23 is a signal peptide; that stretch reads MDPQCTMGLSNILFVMAFLLSGA. Topologically, residues 24–247 are extracellular; it reads APLKIQAYFN…DPQPPPDHIP (224 aa). N-linked (GlcNAc...) asparagine glycans are attached at residues Asn33, Asn47, Asn135, Asn146, Asn154, Asn177, Asn192, and Asn213. In terms of domain architecture, Ig-like V-type spans 33-131; sequence NETADLPCQF…RIHQMNSELS (99 aa). An intrachain disulfide couples Cys40 to Cys110. The Ig-like C2-type domain maps to 150–225; sequence NVYINLTCSS…IFCILETDKT (76 aa). Cysteines 157 and 218 form a disulfide. Residues 248 to 268 form a helical membrane-spanning segment; it reads WITAVLPTVIICVMVFCLILW. The Cytoplasmic segment spans residues 269–329; the sequence is KWKKKKRPRN…SSCDKSDTCF (61 aa). The interval 277 to 329 is disordered; it reads RNSYKCGTNTMEREESEQTKKREKIHIPERSDEAQRVFKSSKTSSCDKSDTCF. A compositionally biased stretch (basic and acidic residues) spans 287–312; sequence MEREESEQTKKREKIHIPERSDEAQR.

In terms of assembly, homodimer. Interacts with MARCH8. Interacts (via cytoplasmic domain) with PHB1 and PHB2; the interactions increases after priming with CD40. Interacts with CD28. As to quaternary structure, (Microbial infection) Interacts with adenovirus subgroup b fiber protein. (Microbial infection) Interacts with Orthopoxvirus OPG038/M2 protein, inhibiting the interaction with CTLA4 and CD28. In terms of processing, polyubiquitinated; which is promoted by MARCH8 and results in endocytosis and lysosomal degradation. In terms of tissue distribution, expressed by activated B-lymphocytes and monocytes.

It localises to the cell membrane. Receptor involved in the costimulatory signal essential for T-lymphocyte proliferation and interleukin-2 production, by binding CD28 or CTLA-4. May play a critical role in the early events of T-cell activation and costimulation of naive T-cells, such as deciding between immunity and anergy that is made by T-cells within 24 hours after activation. Also involved in the regulation of B cells function, plays a role in regulating the level of IgG(1) produced. Upon CD40 engagement, activates NF-kappa-B signaling pathway via phospholipase C and protein kinase C activation. Its function is as follows. Interferes with the formation of CD86 clusters, and thus acts as a negative regulator of T-cell activation. Functionally, (Microbial infection) Acts as a receptor for adenovirus subgroup B. This chain is T-lymphocyte activation antigen CD86 (CD86), found in Homo sapiens (Human).